We begin with the raw amino-acid sequence, 261 residues long: Imidazole glycerol phosphate synthase subunit HisF (261 aa).

Active-site residues include aspartate 12 and aspartate 131.

Belongs to the HisA/HisF family. Heterodimer of HisH and HisF.

The protein localises to the cytoplasm. The catalysed reaction is 5-[(5-phospho-1-deoxy-D-ribulos-1-ylimino)methylamino]-1-(5-phospho-beta-D-ribosyl)imidazole-4-carboxamide + L-glutamine = D-erythro-1-(imidazol-4-yl)glycerol 3-phosphate + 5-amino-1-(5-phospho-beta-D-ribosyl)imidazole-4-carboxamide + L-glutamate + H(+). It functions in the pathway amino-acid biosynthesis; L-histidine biosynthesis; L-histidine from 5-phospho-alpha-D-ribose 1-diphosphate: step 5/9. Functionally, IGPS catalyzes the conversion of PRFAR and glutamine to IGP, AICAR and glutamate. The HisF subunit catalyzes the cyclization activity that produces IGP and AICAR from PRFAR using the ammonia provided by the HisH subunit. This chain is Imidazole glycerol phosphate synthase subunit HisF, found in Brucella anthropi (strain ATCC 49188 / DSM 6882 / CCUG 24695 / JCM 21032 / LMG 3331 / NBRC 15819 / NCTC 12168 / Alc 37) (Ochrobactrum anthropi).